The chain runs to 70 residues: U-scutigerotoxin(02)-Tl1a (70 aa).

An N-terminal signal peptide occupies residues 1–17; the sequence is MKYILLGLLLMVVLANA.

This sequence belongs to the scutigerotoxin-02 family. Post-translationally, contains 4 disulfide bonds. In terms of tissue distribution, expressed by the venom gland.

The protein resides in the secreted. The protein is U-scutigerotoxin(02)-Tl1a of Thereuopoda longicornis (Long-legged centipede).